We begin with the raw amino-acid sequence, 417 residues long: MKATRDHASAPFCTRFNHSDPGIWAAERAVEAPNNLTLPPEPSEDCGSVSVAFSMTMMITGFVGNALAITLVSKSYRRREGKRKKSFLLCIGWLALTDMVGQLLTSPVVIVLYLSHQRWEQLDPSGRLCTFFGLTMTVFGLSSLFIASAMAVERALATRAPHWYSSHMKTSVTRAVLLGVWLAVLAFALLPVLGVGQYTIQWPGTWCFISTGPGGNGTNSRQNWGNVFFASAFAILGLSALVVTFACNLATIKALVSRCRAKATASQSSAQWGRITTETAIQLMGIMCVLSVCWSPLLIMMLKMIFNHTSVEHCKTYTENQDECNFFLIAVRLASLNQILDPWVYLLLRKILLQKFCQLLKGHSYGLDTEGGTENKDKEMKENLYISNLSRFFILLGHFTEARRGRGHIYLHTLEHQ.

The Extracellular segment spans residues 1-52; sequence MKATRDHASAPFCTRFNHSDPGIWAAERAVEAPNNLTLPPEPSEDCGSVSVA. 2 N-linked (GlcNAc...) asparagine glycosylation sites follow: asparagine 17 and asparagine 35. The helical transmembrane segment at 53-77 threads the bilayer; sequence FSMTMMITGFVGNALAITLVSKSYR. Topologically, residues 78-90 are cytoplasmic; sequence RREGKRKKSFLLC. Residues 91-111 traverse the membrane as a helical segment; that stretch reads IGWLALTDMVGQLLTSPVVIV. The Extracellular portion of the chain corresponds to 112 to 130; sequence LYLSHQRWEQLDPSGRLCT. Residues 131 to 152 form a helical membrane-spanning segment; sequence FFGLTMTVFGLSSLFIASAMAV. Residues 153 to 174 are Cytoplasmic-facing; the sequence is ERALATRAPHWYSSHMKTSVTR. The chain crosses the membrane as a helical span at residues 175–196; the sequence is AVLLGVWLAVLAFALLPVLGVG. The Extracellular segment spans residues 197 to 226; sequence QYTIQWPGTWCFISTGPGGNGTNSRQNWGN. N-linked (GlcNAc...) asparagine glycosylation occurs at asparagine 216. Residues 227–252 traverse the membrane as a helical segment; sequence VFFASAFAILGLSALVVTFACNLATI. The Cytoplasmic segment spans residues 253–282; that stretch reads KALVSRCRAKATASQSSAQWGRITTETAIQ. A helical transmembrane segment spans residues 283-306; that stretch reads LMGIMCVLSVCWSPLLIMMLKMIF. Asparagine 307 carries N-linked (GlcNAc...) asparagine glycosylation. Residues 307–326 are Extracellular-facing; that stretch reads NHTSVEHCKTYTENQDECNF. Residues 327-348 traverse the membrane as a helical segment; it reads FLIAVRLASLNQILDPWVYLLL. Residues 349 to 417 are Cytoplasmic-facing; it reads RKILLQKFCQ…HIYLHTLEHQ (69 aa).

The protein belongs to the G-protein coupled receptor 1 family. Interacts (via C-terminus) with MKLN1.

The protein resides in the cell membrane. In terms of biological role, receptor for prostaglandin E2 (PGE2). The various isoforms have identical ligand binding properties but interact with different second messenger systems: isoform EP3A couples to G(i)/G(o) proteins; isoform EP3B and isoform EP3C couple to G(s), and isoform EP3D couples to G(i), G(s) and G(p). Required for normal development of fever in response to pyrinogens, including IL1B, prostaglandin E2 and bacterial lipopolysaccharide (LPS). Required for normal potentiation of platelet aggregation by prostaglandin E2, and thus plays a role in the regulation of blood coagulation. Required for increased HCO3(-) secretion in the duodenum in response to mucosal acidification, and thereby contributes to the protection of the mucosa against acid-induced ulceration. Not required for normal kidney function, normal urine volume and osmolality. In Bos taurus (Bovine), this protein is Prostaglandin E2 receptor EP3 subtype (PTGER3).